The following is a 629-amino-acid chain: MSSESTTFIVDVSPSMMKNNNVSKSMAYLEYTLLNKSKKSRKTDWISCYLANCPVSENSQEIPNVFQIQSFLAPVTTTATIGFIKRLKQYCDQHSHDSSNEGLQSMIQCLLVVSLDIKQQFQARKILKQIVVFTDNLDDLDITDEEIDLLTEELSTRIILIDCGKDTQEERKKSNWLKLVEAIPNSRIYNMNELLVEITSPATSVVKPVRVFSGELRLGADILSTQTSNPSGSMQDENCLCIKVEAFPATKAVSGLNRKTAVEVEDSQKKERYVGVKSIIEYEIHNEGNKKNVSEDDQSGSSYIPVTISKDSVTKAYRYGADYVVLPSVLVDQTVYESFPGLDLRGFLNREALPRYFLTSESSFITADTRLGCQSDLMAFSALVDVMLENRKIAVARYVSKKDSEVNMCALCPVLIEHSNINSEKKFVKSLTLCRLPFAEDERVTDFPKLLDRTTTSGVPLKKETDGHQIDELMEQFVDSMDTDELPEIPLGNYYQPIGEVTTDTTLPLPSLNKDQEENKKDPLRIPTVFVYRQQQVLLEWIHQLMINDSREFEIPELPDSLKNKISPYTHKKFDSTKLVEVLGIKKVDKLKLDSELKTELEREKIPDLETLLKRGEQHSRGSPNNSNN.

The Ku domain maps to serine 254 to glutamine 476. The segment covering aspartate 608–serine 620 has biased composition (basic and acidic residues). The interval aspartate 608–asparagine 629 is disordered.

Belongs to the ku80 family. Heterodimer of YKU70/HDF1 and YKU80/HDF2. Interacts with SIR4.

The protein resides in the nucleus. It is found in the chromosome. Its subcellular location is the telomere. It carries out the reaction ATP + H2O = ADP + phosphate + H(+). In terms of biological role, single-stranded DNA-dependent ATP-dependent helicase. Involved in non-homologous end joining (NHEJ) DNA double strand break repair. DNA-binding is sequence-independent but has a high affinity to nicks in double-stranded DNA and to the ends of duplex DNA. Binds to naturally occurring chromosomal ends, and therefore provides chromosomal end protection. Appears to have a role in recruitment of telomerase and CDC13 to the telomere and the subsequent telomere elongation. Required also for telomere recombination to repair telomeric ends in the absence of telomerase. KU70, of the KU70/KU80 heterodimer, binds to the stem loop of TLC1, the RNA component of telomerase. Involved in telomere maintenance. Interacts with telomeric repeats and subtelomeric sequences thereby controlling telomere length and protecting against subtelomeric rearrangement. Maintains telomeric chromatin, which is involved in silencing the expression of genes located at the telomere. Required for mating-type switching. The protein is ATP-dependent DNA helicase II subunit 2 (YKU80) of Saccharomyces cerevisiae (strain ATCC 204508 / S288c) (Baker's yeast).